Reading from the N-terminus, the 517-residue chain is Ribonuclease Y (517 aa).

The chain crosses the membrane as a helical span at residues 1 to 21; sequence MIEVLIGLGAGVVGVGAGYLY. The region spanning 207 to 273 is the KH domain; the sequence is LINVVNIKND…TRVIELLVED (67 aa). The 94-residue stretch at 333–426 folds into the HD domain; it reads ALAHSLEVAH…VCAADALSAA (94 aa).

It belongs to the RNase Y family.

Its subcellular location is the cell membrane. In terms of biological role, endoribonuclease that initiates mRNA decay. This is Ribonuclease Y from Campylobacter concisus (strain 13826).